Consider the following 858-residue polypeptide: DNA mismatch repair protein MutS (858 aa).

603 to 610 (GPNMSGKS) is an ATP binding site.

Belongs to the DNA mismatch repair MutS family.

Functionally, this protein is involved in the repair of mismatches in DNA. It is possible that it carries out the mismatch recognition step. This protein has a weak ATPase activity. This Streptococcus agalactiae serotype Ia (strain ATCC 27591 / A909 / CDC SS700) protein is DNA mismatch repair protein MutS.